The primary structure comprises 163 residues: Phosphopantetheine adenylyltransferase (163 aa).

Threonine 10 is a binding site for substrate. ATP is bound by residues 10-11 (TF) and histidine 18. The substrate site is built by lysine 42, leucine 74, and arginine 88. ATP contacts are provided by residues 89 to 91 (GLR), glutamate 99, and 124 to 130 (NSFISST).

The protein belongs to the bacterial CoaD family. In terms of assembly, homohexamer. It depends on Mg(2+) as a cofactor.

The protein localises to the cytoplasm. The enzyme catalyses (R)-4'-phosphopantetheine + ATP + H(+) = 3'-dephospho-CoA + diphosphate. The protein operates within cofactor biosynthesis; coenzyme A biosynthesis; CoA from (R)-pantothenate: step 4/5. Functionally, reversibly transfers an adenylyl group from ATP to 4'-phosphopantetheine, yielding dephospho-CoA (dPCoA) and pyrophosphate. In Shewanella putrefaciens (strain CN-32 / ATCC BAA-453), this protein is Phosphopantetheine adenylyltransferase.